Reading from the N-terminus, the 579-residue chain is Adenine deaminase (579 aa).

The protein belongs to the metallo-dependent hydrolases superfamily. Adenine deaminase family. Mn(2+) is required as a cofactor.

It catalyses the reaction adenine + H2O + H(+) = hypoxanthine + NH4(+). The polypeptide is Adenine deaminase (Listeria innocua serovar 6a (strain ATCC BAA-680 / CLIP 11262)).